The following is a 409-amino-acid chain: Argininosuccinate synthase (409 aa).

Residues 10 to 18 and Ala37 each bind ATP; that span reads AYSGGLDTS. L-citrulline-binding residues include Tyr90 and Ser95. ATP is bound at residue Gly120. Residues Thr122, Asn126, and Asp127 each coordinate L-aspartate. L-citrulline is bound at residue Asn126. L-citrulline is bound by residues Arg130, Ser182, Ser191, Glu267, and Tyr279.

This sequence belongs to the argininosuccinate synthase family. Type 1 subfamily. Homotetramer.

Its subcellular location is the cytoplasm. It catalyses the reaction L-citrulline + L-aspartate + ATP = 2-(N(omega)-L-arginino)succinate + AMP + diphosphate + H(+). It participates in amino-acid biosynthesis; L-arginine biosynthesis; L-arginine from L-ornithine and carbamoyl phosphate: step 2/3. In Aromatoleum aromaticum (strain DSM 19018 / LMG 30748 / EbN1) (Azoarcus sp. (strain EbN1)), this protein is Argininosuccinate synthase.